Consider the following 314-residue polypeptide: Palmitoyl-protein thioesterase 1 (314 aa).

Positions 1–25 are cleaved as a signal peptide; the sequence is MISICCSRFSCILFLLFLIFSLVLS. Disulfide bonds link Cys53–Cys54, Cys104–Cys136, and Cys160–Cys168. The Nucleophile role is filled by Ser123. N-linked (GlcNAc...) asparagine glycosylation occurs at Asn240. Residues Asp241 and His295 contribute to the active site.

It belongs to the palmitoyl-protein thioesterase family. As to expression, ubiquitously expressed.

It localises to the lysosome. The enzyme catalyses S-hexadecanoyl-L-cysteinyl-[protein] + H2O = L-cysteinyl-[protein] + hexadecanoate + H(+). In terms of biological role, cleaves thioester-linked long fatty acyl groups such as palmitate from modified cysteine residues in proteins or peptides. The polypeptide is Palmitoyl-protein thioesterase 1 (Ppt1) (Drosophila melanogaster (Fruit fly)).